Consider the following 359-residue polypeptide: Popy class I histocompatibility antigen, alpha chain E (359 aa).

Positions 1–18 (GTLLLLLSEALALTETWA) are cleaved as a signal peptide. The tract at residues 19 to 108 (GSHSLKYFHT…LRGYYNQTEA (90 aa)) is alpha-1. At 19–302 (GSHSLKYFHT…EPASQTTIPI (284 aa)) the chain is on the extracellular side. An N-linked (GlcNAc...) asparagine glycan is attached at N104. An alpha-2 region spans residues 109–200 (GSHTLQWMHG…EKGKETLLHL (92 aa)). Cystine bridges form between C119–C182 and C221–C277. Positions 201 to 292 (DPPKTHVTHH…GLPEPLTLRW (92 aa)) are alpha-3. Residues 203–291 (PKTHVTHHRI…EGLPEPLTLR (89 aa)) form the Ig-like C1-type domain. A connecting peptide region spans residues 293 to 302 (EPASQTTIPI). The helical transmembrane segment at 303 to 326 (VGIFAGLVLLGAVVTGATVVAAVM) threads the bilayer. Over 327-359 (WRKKSSGGKGGSYSKAEWSDSAQGSESLTACKA) the chain is Cytoplasmic. Residues 330–359 (KSSGGKGGSYSKAEWSDSAQGSESLTACKA) form a disordered region. Polar residues predominate over residues 346 to 359 (DSAQGSESLTACKA). Phosphoserine is present on S351.

This sequence belongs to the MHC class I family. Heterodimer of an alpha chain and a beta chain (beta-2-microglobulin).

It is found in the membrane. Involved in the presentation of foreign antigens to the immune system. This Pongo pygmaeus (Bornean orangutan) protein is Popy class I histocompatibility antigen, alpha chain E (Popy-E).